Consider the following 456-residue polypeptide: Cysteine--tRNA ligase (456 aa).

Cysteine 29 contacts Zn(2+). A 'HIGH' region motif is present at residues proline 31–asparagine 41. Zn(2+)-binding residues include cysteine 209, histidine 234, and glutamate 238. The short motif at lysine 267–serine 271 is the 'KMSKS' region element. Residue lysine 270 coordinates ATP.

Belongs to the class-I aminoacyl-tRNA synthetase family. In terms of assembly, monomer. The cofactor is Zn(2+).

It localises to the cytoplasm. It catalyses the reaction tRNA(Cys) + L-cysteine + ATP = L-cysteinyl-tRNA(Cys) + AMP + diphosphate. This chain is Cysteine--tRNA ligase, found in Rhodospirillum centenum (strain ATCC 51521 / SW).